The following is a 659-amino-acid chain: QWRF motif-containing protein 2 (659 aa).

Disordered stretches follow at residues 1-125 (MVAA…SVTV), 157-221 (SKKK…LDCG), 291-317 (DTDS…ISKS), 340-359 (RLQD…TSSI), and 371-429 (SDAV…NAYN). Low complexity predominate over residues 42 to 72 (SPSPSHSVSSTTTTTTTTTTTTSSSSSSSSS). Polar residues predominate over residues 90–102 (RSTTNSASNSIKT). Residues 172–190 (STPERRRSTPVRDQRENSK) show a composition bias toward basic and acidic residues. Composition is skewed to polar residues over residues 206 to 216 (SESVVPNSLSR) and 291 to 303 (DTDS…TNGV). Composition is skewed to low complexity over residues 345 to 359 (GSPL…TSSI) and 401 to 418 (ATTT…SRAR). Residues 468–471 (QWRF) carry the QWRF motif motif.

Belongs to the QWRF family.

The sequence is that of QWRF motif-containing protein 2 (QWRF2) from Arabidopsis thaliana (Mouse-ear cress).